The sequence spans 116 residues: Large ribosomal subunit protein bL19 (116 aa).

The protein belongs to the bacterial ribosomal protein bL19 family.

Its function is as follows. This protein is located at the 30S-50S ribosomal subunit interface and may play a role in the structure and function of the aminoacyl-tRNA binding site. The polypeptide is Large ribosomal subunit protein bL19 (Stutzerimonas stutzeri (strain A1501) (Pseudomonas stutzeri)).